Consider the following 184-residue polypeptide: Jacalin-related lectin 2 (184 aa).

The Jacalin-type lectin domain maps to 4-163 (KIKIGPVGTD…LQNIGVYLQP (160 aa)).

Belongs to the jacalin lectin family.

This chain is Jacalin-related lectin 2 (JAL2), found in Arabidopsis thaliana (Mouse-ear cress).